Reading from the N-terminus, the 1397-residue chain is MSDKSNDGGENDSLPMDNININSIDDENNNDINNQDDNENNNNNNNNKNSDDNEENLKDYKNKKEDFGNIKMDTIDDRPTNNGILSPIDITSDGGDSVKTLSTTQSKKLDEGEKKEGEVGPQVPFFSLFRFAKPFDILLMIIGTIGALANGVSMPAISIVFGRLMNSFSPENLADPNFDLVETVTSNAMYFIYIGCGVFVCSYVEVAFWMLAGERQAVRCRKAYLKAILKQEIGWYDVTKSSELSTRISSDTLLFQEAIGEKIGNFLHHTSTFICGFIVGFVNGWQLTLVIFALTPLIAAAGAFMTKMMADLTKKGQDAYAKAGGVAEEKIGSIRTVSTFSGEPFEVKRYTERLKEALDIGTKKGIMNGIGIGLVFLVLFGTYSLSFWYGGKLIVDRKWNPVPDRPWQGGDVLTVFFSVIMGAMALGQASPNVASFANGRGAAFKIYEVVDRNSKIDPFSTEGRSIEETVQGNIEYRNIGFSYPSRPDVKIFNNFNLTIKKGTTVALVGDSGGGKSSVIGLLERFYDPDEGEVYLDGTNIKEINIHSLRRNIGLVSQEPVLFANSIAENIRYGNENATMDQIIEACKTANAHDFISALPEGYDTQVGEKGVQMSGGQKQRIAIARAMIKDPKILLLDEATSALDSQNELLVQQSIEKLMIGRTTIVIAHRLSTIQDADQIAVVKGGAIVEIGTHPELYALNGVYTQLVNRQQKGGDDGDKKKKKKSKESSKDESNNNIGPSSISIDKSIQSIGADSLETSTIGLVNDNDNKKKKKKEKKPQEKSVPIGRILKLSRGDWPHFLIGLVGATLNGAIMPVFSIIFSEILGIFQEQDTDELTRRSRNMALWFILLAVVAALANFIQIYCFTFIGEKLTFNLRRLSFESIMRQDIGWFDLTENSTGRLTANLATEATLVQGMTSQRLGLLIQNIVTIVAGLVIAFVSGWKLTLVVLACVPVIGFAGKVEMDFFQGFSQKGKEAYAECGQVASEAIGGIRTVSSFTCENKILEKFRQCLQKPIQMSFRKSNVSGLSFGFSQCTLFFIYTLTYWYGGKLVDSGEWPAKESTLETYCYNGEYANIGYTDEATCIKSFTTTEGFSMMMRVFFAIIMSAMGVGQSMAFMPDLGKAKLAAVAIFSLIDRVSEIDPFENKGQTLPEFKGDIEFKDIKFSYPSRPNKAVFQGFNLVIPHGKKVALVGNSGGGKSSVISLLERFYNPSQGSITIDGVNIKDLNLNWLRGNMGLVGQEPFLFSGTIFENIIYGKPDATMDEVVEAAKAANAHTFIESLPDAYHTQLGDKFTQLSGGQKQRVAIARAIIRNPKVLLLDEATSALDTVSEKVVQVALDNVSKGRTSIVIAHRLSTVIDADLIVVVKEGKVVELGTHETLLAENGFYAELVSRQM.

The interval 1–117 (MSDKSNDGGE…KLDEGEKKEG (117 aa)) is disordered. Acidic residues predominate over residues 24–39 (IDDENNNDINNQDDNE). Positions 37–69 (DNENNNNNNNNKNSDDNEENLKDYKNKKEDFGN) form a coiled coil. 2 stretches are compositionally biased toward basic and acidic residues: residues 49 to 79 (NSDD…DDRP) and 107 to 117 (KKLDEGEKKEG). Helical transmembrane passes span 137–157 (ILLM…MPAI), 191–211 (FIYI…FWML), 273–293 (FICG…VIFA), 369–389 (GIGI…SFWY), and 407–427 (WQGG…MALG). The ABC transmembrane type-1 1 domain occupies 140–438 (MIIGTIGALA…ASPNVASFAN (299 aa)). In terms of domain architecture, ABC transporter 1 spans 474-710 (IEYRNIGFSY…NGVYTQLVNR (237 aa)). 509–516 (GDSGGGKS) serves as a coordination point for ATP. Disordered regions lie at residues 710–744 (RQQK…SSIS) and 763–783 (GLVN…PQEK). The span at 735-744 (NNNIGPSSIS) shows a compositional bias: low complexity. 6 consecutive transmembrane segments (helical) span residues 801–821 (FLIG…FSII), 846–866 (LWFI…IYCF), 922–942 (LGLL…AFVS), 948–968 (LVVL…MDFF), 1028–1048 (GLSF…TYWY), and 1101–1121 (VFFA…FMPD). The ABC transmembrane type-1 2 domain occupies 801-1124 (FLIGLVGATL…SMAFMPDLGK (324 aa)). One can recognise an ABC transporter 2 domain in the interval 1159–1395 (IEFKDIKFSY…NGFYAELVSR (237 aa)). Residue 1194–1201 (GNSGGGKS) coordinates ATP.

The protein belongs to the ABC transporter superfamily. ABCB family. Multidrug resistance exporter (TC 3.A.1.201) subfamily.

The protein localises to the membrane. This Dictyostelium discoideum (Social amoeba) protein is ABC transporter B family member 2 (abcB2).